A 300-amino-acid chain; its full sequence is Glycine--tRNA ligase alpha subunit (300 aa).

Belongs to the class-II aminoacyl-tRNA synthetase family. Tetramer of two alpha and two beta subunits.

Its subcellular location is the cytoplasm. It carries out the reaction tRNA(Gly) + glycine + ATP = glycyl-tRNA(Gly) + AMP + diphosphate. The polypeptide is Glycine--tRNA ligase alpha subunit (glyQ) (Buchnera aphidicola subsp. Baizongia pistaciae (strain Bp)).